The chain runs to 147 residues: D-aminoacyl-tRNA deacylase (147 aa).

A Gly-cisPro motif, important for rejection of L-amino acids motif is present at residues 137–138 (GP).

It belongs to the DTD family. Homodimer.

The protein resides in the cytoplasm. It carries out the reaction glycyl-tRNA(Ala) + H2O = tRNA(Ala) + glycine + H(+). The enzyme catalyses a D-aminoacyl-tRNA + H2O = a tRNA + a D-alpha-amino acid + H(+). Its function is as follows. An aminoacyl-tRNA editing enzyme that deacylates mischarged D-aminoacyl-tRNAs. Also deacylates mischarged glycyl-tRNA(Ala), protecting cells against glycine mischarging by AlaRS. Acts via tRNA-based rather than protein-based catalysis; rejects L-amino acids rather than detecting D-amino acids in the active site. By recycling D-aminoacyl-tRNA to D-amino acids and free tRNA molecules, this enzyme counteracts the toxicity associated with the formation of D-aminoacyl-tRNA entities in vivo and helps enforce protein L-homochirality. The protein is D-aminoacyl-tRNA deacylase of Acinetobacter baumannii (strain ATCC 17978 / DSM 105126 / CIP 53.77 / LMG 1025 / NCDC KC755 / 5377).